A 176-amino-acid polypeptide reads, in one-letter code: MNIEDLWDQFHQPLKTYISHRVNDQSIVDDLLQIVFMKIQVHLPNLIDEQKIDSWIYRITRNTIIDFYRTKKTSEILPDVLHFNDSAEEENFTKEATVCIRSTIKRLPEKYREALELTDFQGLSQKELSEKLGISYSGAKSRVQRGRGKLKQLLEGCCHIEADRYGNIVDFRILKE.

A Polymerase core binding motif is present at residues 30-43 (DLLQIVFMKIQVHL). Residues 125-144 (QKELSEKLGISYSGAKSRVQ) constitute a DNA-binding region (H-T-H motif).

It belongs to the sigma-70 factor family. ECF subfamily.

Its function is as follows. Sigma factors are initiation factors that promote the attachment of RNA polymerase to specific initiation sites and are then released. This is RNA polymerase sigma factor SigZ (sigZ) from Bacillus subtilis (strain 168).